The following is a 236-amino-acid chain: Exosome complex component Rrp4 (236 aa).

Residues Gly64 to Lys133 form the S1 motif domain. The region spanning Glu141–Ile199 is the KH domain.

This sequence belongs to the RRP4 family. As to quaternary structure, component of the archaeal exosome complex. Forms a trimer of Rrp4 and/or Csl4 subunits. The trimer associates with a hexameric ring-like arrangement composed of 3 Rrp41-Rrp42 heterodimers.

The protein resides in the cytoplasm. Its function is as follows. Non-catalytic component of the exosome, which is a complex involved in RNA degradation. Increases the RNA binding and the efficiency of RNA degradation. Confers strong poly(A) specificity to the exosome. This Thermoplasma volcanium (strain ATCC 51530 / DSM 4299 / JCM 9571 / NBRC 15438 / GSS1) protein is Exosome complex component Rrp4.